The sequence spans 1733 residues: Collagen alpha-1(XXIV) chain (1733 aa).

The N-terminal stretch at methionine 1 to valine 35 is a signal peptide. Residues isoleucine 102 to serine 229 form the Laminin G-like domain. An N-linked (GlcNAc...) asparagine glycan is attached at asparagine 157. The tract at residues proline 257–glutamine 335 is disordered. Over residues isoleucine 312–histidine 324 the composition is skewed to polar residues. 3 N-linked (GlcNAc...) asparagine glycosylation sites follow: asparagine 366, asparagine 396, and asparagine 448. A disordered region spans residues tyrosine 505–arginine 1499. Collagen-like domains are found at residues leucine 506–serine 561, glycine 577–arginine 636, glycine 679–glutamine 738, glycine 742–asparagine 801, glycine 802–valine 861, glycine 886–arginine 945, glycine 946–valine 1005, glycine 1006–arginine 1065, glycine 1072–arginine 1131, glycine 1135–glycine 1189, arginine 1191–aspartate 1215, glycine 1220–arginine 1279, glycine 1316–glutamine 1375, glycine 1376–valine 1435, and glycine 1439–arginine 1498. Positions aspartate 512–isoleucine 524 are enriched in pro residues. Composition is skewed to low complexity over residues proline 573 to leucine 599 and proline 699 to alanine 708. Positions aspartate 776 to glutamate 789 are enriched in pro residues. Residues proline 912–methionine 921 are compositionally biased toward pro residues. Residues proline 923–glutamine 944 show a composition bias toward low complexity. Over residues glycine 1045–glycine 1054 the composition is skewed to gly residues. Positions alanine 1056–glutamate 1074 are enriched in low complexity. Over residues glycine 1084–glycine 1093 the composition is skewed to gly residues. Over residues proline 1175–proline 1205 the composition is skewed to low complexity. Positions threonine 1237–lysine 1246 are enriched in basic and acidic residues. Residues tyrosine 1323–proline 1339 are compositionally biased toward low complexity. Positions glycine 1352–glycine 1361 are enriched in gly residues. Low complexity-rich tracts occupy residues proline 1371 to glutamine 1386 and isoleucine 1434 to isoleucine 1444. The segment covering glutamine 1485–proline 1495 has biased composition (pro residues). One can recognise a Fibrillar collagen NC1 domain in the interval serine 1534–leucine 1733.

The protein belongs to the fibrillar collagen family. Expressed in skeleton. Found at ossification centers of the craniofacial, axial and appendicular skeleton. Also expressed in retina and to a lower extent in cornea, skin and tendon.

The protein localises to the secreted. It localises to the extracellular space. Its subcellular location is the extracellular matrix. Functionally, involved in osteoblast differentiation. The chain is Collagen alpha-1(XXIV) chain (Col24a1) from Mus musculus (Mouse).